Consider the following 80-residue polypeptide: ATP synthase subunit c (80 aa).

2 consecutive transmembrane segments (helical) span residues 11-31 (IAAT…IGIL) and 54-74 (FIVM…GLYI).

It belongs to the ATPase C chain family. As to quaternary structure, F-type ATPases have 2 components, F(1) - the catalytic core - and F(0) - the membrane proton channel. F(1) has five subunits: alpha(3), beta(3), gamma(1), delta(1), epsilon(1). F(0) has three main subunits: a(1), b(2) and c(10-14). The alpha and beta chains form an alternating ring which encloses part of the gamma chain. F(1) is attached to F(0) by a central stalk formed by the gamma and epsilon chains, while a peripheral stalk is formed by the delta and b chains.

It localises to the cell membrane. Functionally, f(1)F(0) ATP synthase produces ATP from ADP in the presence of a proton or sodium gradient. F-type ATPases consist of two structural domains, F(1) containing the extramembraneous catalytic core and F(0) containing the membrane proton channel, linked together by a central stalk and a peripheral stalk. During catalysis, ATP synthesis in the catalytic domain of F(1) is coupled via a rotary mechanism of the central stalk subunits to proton translocation. Key component of the F(0) channel; it plays a direct role in translocation across the membrane. A homomeric c-ring of between 10-14 subunits forms the central stalk rotor element with the F(1) delta and epsilon subunits. In Baumannia cicadellinicola subsp. Homalodisca coagulata, this protein is ATP synthase subunit c.